Reading from the N-terminus, the 139-residue chain is Small ribosomal subunit protein uS19 (139 aa).

Belongs to the universal ribosomal protein uS19 family.

Its function is as follows. Protein S19 forms a complex with S13 that binds strongly to the 16S ribosomal RNA. The protein is Small ribosomal subunit protein uS19 of Methanoregula boonei (strain DSM 21154 / JCM 14090 / 6A8).